The primary structure comprises 423 residues: uncharacterized protein (423 aa).

The Mg(2+) site is built by lysine 181, aspartate 183, and glutamate 184. Lysine 181 carries the N6-carboxylysine modification.

The protein belongs to the RuBisCO large chain family. Type IV subfamily. Mg(2+) serves as cofactor.

Functionally, may be involved in sulfur metabolism and oxidative stress response. Does not show RuBisCO activity. This is an uncharacterized protein from Bordetella bronchiseptica (strain ATCC BAA-588 / NCTC 13252 / RB50) (Alcaligenes bronchisepticus).